The sequence spans 137 residues: Fluoride-specific ion channel FluC 1 (137 aa).

4 helical membrane-spanning segments follow: residues leucine 4–glycine 24, leucine 37–isoleucine 57, isoleucine 62–phenylalanine 82, and isoleucine 100–tyrosine 120. Residues glycine 77 and threonine 80 each coordinate Na(+).

The protein belongs to the fluoride channel Fluc/FEX (TC 1.A.43) family.

The protein localises to the cell membrane. The enzyme catalyses fluoride(in) = fluoride(out). With respect to regulation, na(+) is not transported, but it plays an essential structural role and its presence is essential for fluoride channel function. Functionally, fluoride-specific ion channel. Important for reducing fluoride concentration in the cell, thus reducing its toxicity. This is Fluoride-specific ion channel FluC 1 from Bacillus cereus (strain ATCC 10987 / NRS 248).